The chain runs to 425 residues: Enolase (425 aa).

Residue Gln162 participates in (2R)-2-phosphoglycerate binding. The active-site Proton donor is Glu204. The Mg(2+) site is built by Asp241, Glu282, and Asp309. (2R)-2-phosphoglycerate contacts are provided by Lys334, Arg363, Ser364, and Lys385. The active-site Proton acceptor is Lys334.

It belongs to the enolase family. Mg(2+) serves as cofactor.

The protein localises to the cytoplasm. It localises to the secreted. Its subcellular location is the cell surface. It catalyses the reaction (2R)-2-phosphoglycerate = phosphoenolpyruvate + H2O. The protein operates within carbohydrate degradation; glycolysis; pyruvate from D-glyceraldehyde 3-phosphate: step 4/5. Its function is as follows. Catalyzes the reversible conversion of 2-phosphoglycerate (2-PG) into phosphoenolpyruvate (PEP). It is essential for the degradation of carbohydrates via glycolysis. In Corynebacterium efficiens (strain DSM 44549 / YS-314 / AJ 12310 / JCM 11189 / NBRC 100395), this protein is Enolase.